A 784-amino-acid chain; its full sequence is Transcription factor kayak (784 aa).

Composition is skewed to low complexity over residues 97–106 (QPTQSAYQQQ), 115–126 (NNNNNSNNNANM), and 198–227 (QQQQ…QQQQ). Disordered regions lie at residues 97–126 (QPTQ…NANM), 196–231 (YNQQ…HLPT), 358–404 (PGSD…GNGS), and 421–464 (SGRG…KRRI). Residues 365–378 (SNGSWNEGQLNDDQ) show a composition bias toward polar residues. A compositionally biased stretch (low complexity) spans 380–397 (TTDTSSAATDSTSYQNGG). Residues 421 to 438 (SGRGSGLAANSTTSNSAT) are compositionally biased toward polar residues. In terms of domain architecture, bZIP spans 459-522 (EEKRRIRRER…SQLEYVLQTH (64 aa)). The basic motif stretch occupies residues 461–463 (KRR). The interval 464–471 (IRRERNKL) is leucine-zipper. Position 594 is a phosphoserine (S594). Disordered stretches follow at residues 616–635 (QDGA…TPAK) and 759–784 (PTCS…LVSL).

The protein belongs to the bZIP family. Fos subfamily. In terms of assembly, homodimer. Heterodimer with Jra. The kay-Jra heterodimer binds more stably to the AP-1 site than either of the two proteins alone.

It is found in the nucleus. Functionally, developmentally regulated transcription factor AP-1 binds and recognizes the enhancer DNA sequence: 5'-TGA[CG]TCA-3'. May play a role in the function or determination of a particular subset of cells in the developing embryo. It is able to carry out its function either independently of or in conjunction with Jra. The polypeptide is Transcription factor kayak (Drosophila mojavensis (Fruit fly)).